The following is a 438-amino-acid chain: tRNA-2-methylthio-N(6)-dimethylallyladenosine synthase (438 aa).

In terms of domain architecture, MTTase N-terminal spans 2 to 118 (KSFYLETFGC…LADMVRDAEL (117 aa)). [4Fe-4S] cluster contacts are provided by cysteine 11, cysteine 47, cysteine 81, cysteine 157, cysteine 161, and cysteine 164. Positions 143–373 (PSAEVSRFVT…LALQEEITRQ (231 aa)) constitute a Radical SAM core domain. Residues 376-438 (QMDIGQVLPV…YRNSHLGERV (63 aa)) enclose the TRAM domain.

Belongs to the methylthiotransferase family. MiaB subfamily. In terms of assembly, monomer. [4Fe-4S] cluster serves as cofactor.

The protein resides in the cytoplasm. The catalysed reaction is N(6)-dimethylallyladenosine(37) in tRNA + (sulfur carrier)-SH + AH2 + 2 S-adenosyl-L-methionine = 2-methylsulfanyl-N(6)-dimethylallyladenosine(37) in tRNA + (sulfur carrier)-H + 5'-deoxyadenosine + L-methionine + A + S-adenosyl-L-homocysteine + 2 H(+). Its function is as follows. Catalyzes the methylthiolation of N6-(dimethylallyl)adenosine (i(6)A), leading to the formation of 2-methylthio-N6-(dimethylallyl)adenosine (ms(2)i(6)A) at position 37 in tRNAs that read codons beginning with uridine. This chain is tRNA-2-methylthio-N(6)-dimethylallyladenosine synthase, found in Syntrophotalea carbinolica (strain DSM 2380 / NBRC 103641 / GraBd1) (Pelobacter carbinolicus).